The sequence spans 153 residues: Peptidoglycan-associated lipoprotein (153 aa).

The first 19 residues, 1–19 (MNKFVKSLLVAGSVAALAA), serve as a signal peptide directing secretion. Cys20 carries the N-palmitoyl cysteine lipid modification. A lipid anchor (S-diacylglycerol cysteine) is attached at Cys20. Positions 40–153 (SVADLQQRYN…SKNRRAVLAY (114 aa)) constitute an OmpA-like domain. Peptidoglycan binding stretches follow at residues 55 to 56 (FD) and 97 to 101 (YNIAL).

This sequence belongs to the Pal lipoprotein family. In terms of assembly, the Tol-Pal system is composed of five core proteins: the inner membrane proteins TolA, TolQ and TolR, the periplasmic protein TolB and the outer membrane protein Pal. They form a network linking the inner and outer membranes and the peptidoglycan layer.

The protein localises to the cell outer membrane. Functionally, part of the Tol-Pal system, which plays a role in outer membrane invagination during cell division and is important for maintaining outer membrane integrity. This chain is Peptidoglycan-associated lipoprotein, found in Haemophilus influenzae (strain ATCC 51907 / DSM 11121 / KW20 / Rd).